Reading from the N-terminus, the 300-residue chain is Mycothiol acetyltransferase (300 aa).

N-acetyltransferase domains follow at residues Ile-4–Thr-140 and Val-151–Asp-300. A 1D-myo-inositol 2-(L-cysteinylamino)-2-deoxy-alpha-D-glucopyranoside-binding site is contributed by Asp-36. Acetyl-CoA is bound at residue Leu-79–Val-81. Positions 178, 219, and 227 each coordinate 1D-myo-inositol 2-(L-cysteinylamino)-2-deoxy-alpha-D-glucopyranoside. Acetyl-CoA is bound at residue Val-231 to Val-233. Tyr-269 is a 1D-myo-inositol 2-(L-cysteinylamino)-2-deoxy-alpha-D-glucopyranoside binding site. Asn-274–Lys-279 is an acetyl-CoA binding site.

Belongs to the acetyltransferase family. MshD subfamily. As to quaternary structure, monomer.

It carries out the reaction 1D-myo-inositol 2-(L-cysteinylamino)-2-deoxy-alpha-D-glucopyranoside + acetyl-CoA = mycothiol + CoA + H(+). Catalyzes the transfer of acetyl from acetyl-CoA to desacetylmycothiol (Cys-GlcN-Ins) to form mycothiol. This is Mycothiol acetyltransferase from Mycobacterium sp. (strain MCS).